Here is a 176-residue protein sequence, read N- to C-terminus: Interleukin-7 (176 aa).

The signal sequence occupies residues 1–25 (MFHVSFRYIFGIPPLILVLLPVASS). Cystine bridges form between C27/C165, C58/C153, and C71/C116. N-linked (GlcNAc...) asparagine glycans are attached at residues N94, N115, and N140.

It belongs to the IL-7/IL-9 family.

Its subcellular location is the secreted. Its function is as follows. Hematopoietic growth factor capable of stimulating the proliferation of lymphoid progenitors. It is important for proliferation during certain stages of B-cell maturation. This is Interleukin-7 (IL7) from Sus scrofa (Pig).